We begin with the raw amino-acid sequence, 209 residues long: uncharacterized protein (209 aa).

Positions 39–75 (VSFENFMERYDTMEKNIQDLQNKYEEMANNLVAVMAD) form a coiled coil. Positions 103–131 (TMKDATSLPPPNPNNEQSVFTNGSPTSGK) are disordered. Residues 116–129 (NNEQSVFTNGSPTS) show a composition bias toward polar residues.

It belongs to the asfivirus K205R family.

Its subcellular location is the host cytoplasm. Induces host endoplasmic reticulum stress and consequently activates autophagy and NF-kappa-B signaling pathway. In turn, may induce autophagy-mediated STING1 degradation and innate immune evasion. This is an uncharacterized protein from Ornithodoros (relapsing fever ticks).